The following is a 1085-amino-acid chain: Solute carrier family 12 member 4 (1085 aa).

Topologically, residues Met-1–Gly-119 are cytoplasmic. Phosphoserine occurs at positions 24, 47, 81, and 88. The chain crosses the membrane as a discontinuously helical span at residues Thr-120–Leu-141. K(+)-binding residues include Asn-131 and Ile-132. Over Thr-142–Gly-149 the chain is Extracellular. The helical transmembrane segment at Val-150–Ser-172 threads the bilayer. Topologically, residues Ala-173–Glu-196 are cytoplasmic. The chain crosses the membrane as a helical span at residues Phe-197–Leu-225. Tyr-216 is a K(+) binding site. Residues Thr-226 to Leu-248 are Extracellular-facing. 2 consecutive transmembrane segments (helical) span residues Asn-249–Lys-271 and Tyr-272–Lys-297. Residues Ser-298–Ser-419 are Extracellular-facing. A disulfide bond links Cys-308 and Cys-323. N-linked (GlcNAc...) asparagine glycosylation is found at Asn-312, Asn-331, and Asn-347. A disulfide bridge connects residues Cys-343 and Cys-353. Residues Phe-420–Arg-440 traverse the membrane as a helical segment. Pro-429 and Thr-432 together coordinate K(+). Gly-433, Ile-434, and Met-435 together coordinate chloride. The Cytoplasmic portion of the chain corresponds to Ser-441 to Ser-450. Residues Ile-451–Phe-473 traverse the membrane as a helical segment. At Gly-474–Pro-504 the chain is on the extracellular side. Residues Trp-505 to Gln-531 form a helical membrane-spanning segment. Residues Ala-532–Pro-554 are Cytoplasmic-facing. Helical transmembrane passes span Thr-555–Asp-575 and Met-576–Val-598. Residue Tyr-589 participates in chloride binding. At Gln-599–Lys-612 the chain is on the cytoplasmic side. A run of 2 helical transmembrane segments spans residues Tyr-613–Trp-635 and Tyr-636–Tyr-651. Residues Ile-652–Ser-1085 are Cytoplasmic-facing. A scissor helix region spans residues Ile-665–Glu-681. ATP is bound by residues Leu-697, Lys-699, Lys-707, Tyr-708, and Val-730. Ser-734 bears the Phosphoserine mark. The ATP site is built by Gly-794, Trp-795, and Tyr-797. 2 positions are modified to phosphoserine: Ser-916 and Ser-967. Phosphothreonine is present on Thr-983. Ser-1050 bears the Phosphoserine mark.

This sequence belongs to the SLC12A transporter family. K/Cl co-transporter subfamily. In terms of assembly, homodimer; adopts a domain-swap conformation at the scissor helices connecting the transmembrane domain and C-terminal domain. Heterodimer with other K-Cl cotransporters. In terms of processing, phosphorylated, phosphorylation may regulate transporter activity. In terms of tissue distribution, detected in embryo, adult heart, erythrocytes, brain, kidney, stomach, ovary, testis and liver.

It is found in the cell membrane. It catalyses the reaction K(+)(in) + chloride(in) = K(+)(out) + chloride(out). Its activity is regulated as follows. Inhibited by WNK3. Functionally, mediates electroneutral potassium-chloride cotransport when activated by cell swelling. May contribute to cell volume homeostasis in single cells. May be involved in the regulation of basolateral Cl(-) exit in NaCl absorbing epithelia. This is Solute carrier family 12 member 4 (Slc12a4) from Mus musculus (Mouse).